Reading from the N-terminus, the 436-residue chain is Adenylosuccinate synthetase (436 aa).

Residues 13–19 (GDEGKGK) and 41–43 (GHT) each bind GTP. The Proton acceptor role is filled by Asp14. Mg(2+) is bound by residues Asp14 and Gly41. Residues 14 to 17 (DEGK), 39 to 42 (NAGH), Thr130, Arg144, Gln225, Thr240, and Arg304 each bind IMP. His42 functions as the Proton donor in the catalytic mechanism. 300-306 (ATTGRSR) contributes to the substrate binding site. GTP contacts are provided by residues Arg306, 332-334 (KLD), and 415-417 (STG).

The protein belongs to the adenylosuccinate synthetase family. Homodimer. Requires Mg(2+) as cofactor.

It is found in the cytoplasm. It carries out the reaction IMP + L-aspartate + GTP = N(6)-(1,2-dicarboxyethyl)-AMP + GDP + phosphate + 2 H(+). Its pathway is purine metabolism; AMP biosynthesis via de novo pathway; AMP from IMP: step 1/2. Its function is as follows. Plays an important role in the de novo pathway of purine nucleotide biosynthesis. Catalyzes the first committed step in the biosynthesis of AMP from IMP. This chain is Adenylosuccinate synthetase, found in Hamiltonella defensa subsp. Acyrthosiphon pisum (strain 5AT).